The sequence spans 300 residues: ETS homologous factor (300 aa).

One can recognise a PNT domain in the interval 29-115; that stretch reads STCNVSSGFF…SNLQHLKWNG (87 aa). Residues 179-204 form a disordered region; it reads LPIAESPDTKKEQDHPTKPHTKKHNP. Basic and acidic residues predominate over residues 185–195; the sequence is PDTKKEQDHPT. The ETS DNA-binding region spans 207–289; it reads THLWEFIRDI…DGRRLVYKFG (83 aa).

This sequence belongs to the ETS family.

The protein localises to the nucleus. Its function is as follows. Transcriptional activator that may play a role in regulating epithelial cell differentiation and proliferation. May act as a repressor for a specific subset of ETS/AP-1-responsive genes, and as a modulator of the nuclear response to mitogen-activated protein kinase signaling cascades. Binds to DNA sequences containing the consensus nucleotide core sequence GGAA. Involved in regulation of TNFRSF10B/DR5 expression through Ets-binding sequences on the TNFRSF10B/DR5 promoter. This Bos taurus (Bovine) protein is ETS homologous factor (EHF).